The chain runs to 328 residues: MSIIDSTTGANASNLPLSPLLVILGNTGSGKSALAINLAKVIPAGIINADSRQIYSRMDIATAKPTLSEMLEIPHYLYSFIQPDQPFSLAEYQTLAYQAIDSLHTQNRLPVLVGGSGQYLKAVLEGWSIPPVAPDETFRAALFEKAEKEGGDVIFTELEKKDPQAATQIDPRNIRRVVRALEVIHKTGGKFSGLLIKNPPPYRVFKIGIHIPREELYRTVDLRVEKMLEQGLEAEVRSLLEKGYKASLPSMSGIGYRQIAKYIEGGISLTEAVEQMKFETHRLIRQQNTYFRLTDTNIHWITLEESRSNGIIQLVCDFLAAENKNEIH.

25 to 32 (GNTGSGKS) contacts ATP. Residue 27-32 (TGSGKS) participates in substrate binding. An interaction with substrate tRNA region spans residues 50-53 (DSRQ).

This sequence belongs to the IPP transferase family. In terms of assembly, monomer. The cofactor is Mg(2+).

It catalyses the reaction adenosine(37) in tRNA + dimethylallyl diphosphate = N(6)-dimethylallyladenosine(37) in tRNA + diphosphate. Its function is as follows. Catalyzes the transfer of a dimethylallyl group onto the adenine at position 37 in tRNAs that read codons beginning with uridine, leading to the formation of N6-(dimethylallyl)adenosine (i(6)A). The polypeptide is tRNA dimethylallyltransferase (Dehalococcoides mccartyi (strain ATCC BAA-2100 / JCM 16839 / KCTC 5957 / BAV1)).